The chain runs to 190 residues: Tegument antigen (190 aa).

EF-hand domains follow at residues 8–43 (SQME…YRLD) and 51–77 (IARF…KVSE). 5 residues coordinate Ca(2+): D55, D57, D59, K61, and E66.

Adult and schistosomula tegument.

This chain is Tegument antigen, found in Schistosoma mansoni (Blood fluke).